A 457-amino-acid chain; its full sequence is Nuclear hormone receptor family member nhr-20 (457 aa).

The segment at residues 16-92 is a DNA-binding region (nuclear receptor); the sequence is TSKCLVCEHP…AGMRRECVQK (77 aa). 2 NR C4-type zinc fingers span residues 19–40 and 56–80; these read CLVC…CLAC and CKKD…FDKC. Residues 125–182 form a disordered region; the sequence is GDQTDDNSPLSIEKKSPPGLLPNDSPMMADFKFDPSDIPSTSGGSTQRLERSPSPKLA. A compositionally biased stretch (polar residues) spans 162 to 171; sequence IPSTSGGSTQ. The NR LBD domain maps to 201–457; the sequence is QLKNSMDRRR…DALSKSLLTL (257 aa).

This sequence belongs to the nuclear hormone receptor family.

The protein resides in the nucleus. In terms of biological role, orphan nuclear receptor. The polypeptide is Nuclear hormone receptor family member nhr-20 (nhr-20) (Caenorhabditis elegans).